Consider the following 552-residue polypeptide: Non-structural protein NS1 (552 aa).

This Bluetongue virus 1 (isolate South Africa) (BTV 1) protein is Non-structural protein NS1 (Segment-5).